The primary structure comprises 200 residues: Fibrillarin-like rRNA/tRNA 2'-O-methyltransferase (200 aa).

S-adenosyl-L-methionine-binding positions include 62–63 (TT), 78–79 (EF), 103–104 (DA), and 123–126 (DVAQ).

The protein belongs to the methyltransferase superfamily. Fibrillarin family. Interacts with nop5. Component of box C/D small ribonucleoprotein (sRNP) particles that contain rpl7ae, FlpA and nop5, plus a guide RNA.

Its function is as follows. Involved in pre-rRNA and tRNA processing. Utilizes the methyl donor S-adenosyl-L-methionine to catalyze the site-specific 2'-hydroxyl methylation of ribose moieties in rRNA and tRNA. Site specificity is provided by a guide RNA that base pairs with the substrate. Methylation occurs at a characteristic distance from the sequence involved in base pairing with the guide RNA. In Methanoculleus marisnigri (strain ATCC 35101 / DSM 1498 / JR1), this protein is Fibrillarin-like rRNA/tRNA 2'-O-methyltransferase.